The sequence spans 213 residues: Probable nicotinate-nucleotide adenylyltransferase (213 aa).

Belongs to the NadD family.

It carries out the reaction nicotinate beta-D-ribonucleotide + ATP + H(+) = deamido-NAD(+) + diphosphate. The protein operates within cofactor biosynthesis; NAD(+) biosynthesis; deamido-NAD(+) from nicotinate D-ribonucleotide: step 1/1. Functionally, catalyzes the reversible adenylation of nicotinate mononucleotide (NaMN) to nicotinic acid adenine dinucleotide (NaAD). In Escherichia coli O17:K52:H18 (strain UMN026 / ExPEC), this protein is Probable nicotinate-nucleotide adenylyltransferase.